Consider the following 319-residue polypeptide: Ferrochelatase (319 aa).

Fe cation-binding residues include H194 and E275.

This sequence belongs to the ferrochelatase family.

It localises to the cytoplasm. The enzyme catalyses heme b + 2 H(+) = protoporphyrin IX + Fe(2+). It functions in the pathway porphyrin-containing compound metabolism; protoheme biosynthesis; protoheme from protoporphyrin-IX: step 1/1. Its function is as follows. Catalyzes the ferrous insertion into protoporphyrin IX. The sequence is that of Ferrochelatase from Hamiltonella defensa subsp. Acyrthosiphon pisum (strain 5AT).